The sequence spans 347 residues: Putative GDP-L-fucose synthase 2 (347 aa).

The disordered stretch occupies residues Met-1–Gly-20. An NADP(+)-binding site is contributed by Gly-41 to Gly-47. Tyr-168 serves as the catalytic Proton donor/acceptor. NADP(+)-binding positions include Lys-172, Pro-195–Leu-198, and His-211. Substrate is bound by residues Arg-219, Trp-234, Arg-241, and Glu-301.

It belongs to the NAD(P)-dependent epimerase/dehydratase family. Fucose synthase subfamily. As to quaternary structure, homodimer.

The enzyme catalyses GDP-beta-L-fucose + NADP(+) = GDP-4-dehydro-alpha-D-rhamnose + NADPH + H(+). The protein operates within nucleotide-sugar biosynthesis; GDP-L-fucose biosynthesis via de novo pathway; GDP-L-fucose from GDP-alpha-D-mannose: step 2/2. Catalyzes the two-step NADP-dependent conversion of GDP-4-dehydro-6-deoxy-D-mannose to GDP-fucose, involving an epimerase and a reductase reaction. The protein is Putative GDP-L-fucose synthase 2 of Oryza sativa subsp. japonica (Rice).